Here is a 135-residue protein sequence, read N- to C-terminus: C-type lectin Cal (135 aa).

Disulfide bonds link Cys3/Cys14, Cys31/Cys131, Cys38/Cys133, and Cys106/Cys123. One can recognise a C-type lectin domain in the interval 10–132 (MNGLCYKIFN…CESKDAFLCQ (123 aa)). Residues Gln96, Asp98, Glu104, Asn119, and Asp120 each coordinate Ca(2+). The short motif at 96–98 (QPD) is the Galactose-binding element.

Belongs to the true venom lectin family. In terms of assembly, homodecamer of disulfide-linked dimers arranged in two pseudo-5-fold symmetric pentamers. As to expression, expressed by the venom gland.

It is found in the secreted. Galactose-binding protein which recognizes specific carbohydrate structures and agglutinates a variety of animal cells by binding to cell-surface glycoproteins and glycolipids. Calcium-dependent lectin. Shows high hemagglutinating activity (MHC=10 ng/ml). In Crotalus atrox (Western diamondback rattlesnake), this protein is C-type lectin Cal.